The following is a 248-amino-acid chain: 4-hydroxy-tetrahydrodipicolinate reductase (248 aa).

Residues Asp-32, Gly-74–Thr-76, and Ser-99–Phe-102 contribute to the NAD(+) site. The Proton donor/acceptor role is filled by His-134. (S)-2,3,4,5-tetrahydrodipicolinate is bound at residue His-135. Lys-138 serves as the catalytic Proton donor. Gly-144 to Thr-145 lines the (S)-2,3,4,5-tetrahydrodipicolinate pocket.

The protein belongs to the DapB family.

It is found in the cytoplasm. The enzyme catalyses (S)-2,3,4,5-tetrahydrodipicolinate + NAD(+) + H2O = (2S,4S)-4-hydroxy-2,3,4,5-tetrahydrodipicolinate + NADH + H(+). It catalyses the reaction (S)-2,3,4,5-tetrahydrodipicolinate + NADP(+) + H2O = (2S,4S)-4-hydroxy-2,3,4,5-tetrahydrodipicolinate + NADPH + H(+). The protein operates within amino-acid biosynthesis; L-lysine biosynthesis via DAP pathway; (S)-tetrahydrodipicolinate from L-aspartate: step 4/4. Catalyzes the conversion of 4-hydroxy-tetrahydrodipicolinate (HTPA) to tetrahydrodipicolinate. This chain is 4-hydroxy-tetrahydrodipicolinate reductase, found in Chlorobium luteolum (strain DSM 273 / BCRC 81028 / 2530) (Pelodictyon luteolum).